Reading from the N-terminus, the 66-residue chain is Muscarinic toxin 1 (66 aa).

4 cysteine pairs are disulfide-bonded: cysteine 3-cysteine 24, cysteine 17-cysteine 42, cysteine 46-cysteine 58, and cysteine 59-cysteine 64.

This sequence belongs to the three-finger toxin family. Short-chain subfamily. Aminergic toxin sub-subfamily. As to expression, expressed by the venom gland.

Its subcellular location is the secreted. In terms of biological role, shows a non-competitive interaction with adrenergic and muscarinic receptors. Binds to alpha-2b (ADRA2B) (IC(50)=2.3 nM), alpha-1a (ADRA1A), alpha-1b (ADRA1B), and alpha-2c (ADRA2C) adrenergic receptors. Reversibly binds to M1 (CHRM1) muscarinic acetylcholine receptors, probably by interacting with the orthosteric site. Also reveals a slightly weaker effect at M3 (CHRM3) and M4 (CHRM4) receptors. The order of potency is ADRA2B&gt;&gt;CHRM1&gt;ADRA1A&gt;ADRA1B&gt;ADRA2C/CHRM4. This chain is Muscarinic toxin 1, found in Dendroaspis angusticeps (Eastern green mamba).